Reading from the N-terminus, the 261-residue chain is Malonyl-[acyl-carrier protein] O-methyltransferase (261 aa).

It belongs to the methyltransferase superfamily.

It carries out the reaction malonyl-[ACP] + S-adenosyl-L-methionine = malonyl-[ACP] methyl ester + S-adenosyl-L-homocysteine. Its pathway is cofactor biosynthesis; biotin biosynthesis. Its function is as follows. Converts the free carboxyl group of a malonyl-thioester to its methyl ester by transfer of a methyl group from S-adenosyl-L-methionine (SAM). It allows to synthesize pimeloyl-ACP via the fatty acid synthetic pathway. The chain is Malonyl-[acyl-carrier protein] O-methyltransferase from Bacteroides thetaiotaomicron (strain ATCC 29148 / DSM 2079 / JCM 5827 / CCUG 10774 / NCTC 10582 / VPI-5482 / E50).